A 560-amino-acid chain; its full sequence is Putative transport protein VIBHAR_02636 (560 aa).

A run of 5 helical transmembrane segments spans residues Leu8–Gly28, Leu37–Phe57, Phe66–Phe86, His91–Ser111, and Val164–Leu184. 2 consecutive RCK C-terminal domains span residues Leu205–Gly292 and Lys293–Phe376. 6 helical membrane passes run Leu386–Phe406, Val409–Leu429, Leu450–His470, Ile478–Ala498, Ser505–Val525, and Ala539–Leu559.

The protein belongs to the AAE transporter (TC 2.A.81) family. YbjL subfamily.

Its subcellular location is the cell membrane. This Vibrio campbellii (strain ATCC BAA-1116) protein is Putative transport protein VIBHAR_02636.